The following is a 251-amino-acid chain: Probable transcriptional regulatory protein cu0933 (251 aa).

The tract at residues 56-79 (AKKSSVPNDNIERARKRGSGEEAG) is disordered.

The protein belongs to the TACO1 family.

The protein localises to the cytoplasm. This is Probable transcriptional regulatory protein cu0933 from Corynebacterium urealyticum (strain ATCC 43042 / DSM 7109).